We begin with the raw amino-acid sequence, 393 residues long: Nuclear hormone receptor family member nhr-90 (393 aa).

The nuclear receptor DNA-binding region spans 6 to 79 (LQTCKICGAE…AGMKIEYFQH (74 aa)). The NR C4-type zinc finger occupies 9–30 (CKICGAENTRGNHFGVQCCRAC). The segment at 47–62 (CLSVHCGEAARFCKPC) adopts an NR C4-type; degenerate zinc-finger fold. The NR LBD domain occupies 121–388 (DLNSLVGKAS…FSHPEMFIDT (268 aa)).

It belongs to the nuclear hormone receptor family.

Its subcellular location is the nucleus. Functionally, orphan nuclear receptor. The chain is Nuclear hormone receptor family member nhr-90 (nhr-90) from Caenorhabditis elegans.